The primary structure comprises 206 residues: Holliday junction branch migration complex subunit RuvA (206 aa).

A domain I region spans residues 1–63; that stretch reads MIASLRGTVI…EDAMKLYGFI (63 aa). The segment at 64–142 is domain II; sequence DNESREMFSV…AFAAGVVDEG (79 aa). Residues 143-153 are flexible linker; that stretch reads GEQISLPNANI. Positions 154 to 206 are domain III; the sequence is ASEVVVEQVSQALVGLGFSEKQSDDAVSFVLAADPSLDTSGALRAALAKLSGK.

This sequence belongs to the RuvA family. In terms of assembly, homotetramer. Forms an RuvA(8)-RuvB(12)-Holliday junction (HJ) complex. HJ DNA is sandwiched between 2 RuvA tetramers; dsDNA enters through RuvA and exits via RuvB. An RuvB hexamer assembles on each DNA strand where it exits the tetramer. Each RuvB hexamer is contacted by two RuvA subunits (via domain III) on 2 adjacent RuvB subunits; this complex drives branch migration. In the full resolvosome a probable DNA-RuvA(4)-RuvB(12)-RuvC(2) complex forms which resolves the HJ.

It localises to the cytoplasm. Its function is as follows. The RuvA-RuvB-RuvC complex processes Holliday junction (HJ) DNA during genetic recombination and DNA repair, while the RuvA-RuvB complex plays an important role in the rescue of blocked DNA replication forks via replication fork reversal (RFR). RuvA specifically binds to HJ cruciform DNA, conferring on it an open structure. The RuvB hexamer acts as an ATP-dependent pump, pulling dsDNA into and through the RuvAB complex. HJ branch migration allows RuvC to scan DNA until it finds its consensus sequence, where it cleaves and resolves the cruciform DNA. The chain is Holliday junction branch migration complex subunit RuvA from Corynebacterium glutamicum (strain ATCC 13032 / DSM 20300 / JCM 1318 / BCRC 11384 / CCUG 27702 / LMG 3730 / NBRC 12168 / NCIMB 10025 / NRRL B-2784 / 534).